A 514-amino-acid polypeptide reads, in one-letter code: Glutathione-binding protein GsiB (514 aa).

The N-terminal stretch at methionine 1–alanine 26 is a signal peptide.

It belongs to the bacterial solute-binding protein 5 family. In terms of assembly, the complex is composed of two ATP-binding proteins (GsiA), two transmembrane proteins (GsiC and GsiD) and a solute-binding protein (GsiB).

The protein resides in the periplasm. Part of the ABC transporter complex GsiABCD involved in glutathione import. Binds glutathione. In Shigella flexneri serotype 5b (strain 8401), this protein is Glutathione-binding protein GsiB.